A 66-amino-acid polypeptide reads, in one-letter code: Large ribosomal subunit protein uL29 (66 aa).

The protein belongs to the universal ribosomal protein uL29 family.

This Nitrosococcus oceani (strain ATCC 19707 / BCRC 17464 / JCM 30415 / NCIMB 11848 / C-107) protein is Large ribosomal subunit protein uL29.